Reading from the N-terminus, the 397-residue chain is ORC1-type DNA replication protein 1 (397 aa).

ATP-binding positions include 67 to 71 (TGKTA), Y208, and R220.

Belongs to the CDC6/cdc18 family.

In terms of biological role, involved in regulation of DNA replication. The sequence is that of ORC1-type DNA replication protein 1 (cdc6-1) from Sulfolobus acidocaldarius (strain ATCC 33909 / DSM 639 / JCM 8929 / NBRC 15157 / NCIMB 11770).